Consider the following 582-residue polypeptide: Colicin-E9 (582 aa).

Disordered stretches follow at residues 1–74, 246–270, 294–321, 422–489, and 510–542; these read MSGG…SGGG, SPGV…NTRD, PDQV…EAAE, ADAA…IADK, and SKDP…QQVG. Over residues 20 to 35 the composition is skewed to gly residues; sequence INGGPTGIGVSGGASD. Positions 36–45 are enriched in low complexity; the sequence is GSGWSSENNP. Residues 46–74 are compositionally biased toward gly residues; it reads WGGGSGSGIHWGGGSGRGNGGGNGNSGGG. 3 stretches are compositionally biased toward basic and acidic residues: residues 297 to 321, 430 to 453, and 465 to 476; these read VKQR…EAAE, QERR…ESKR, and PVGDKWLDDAGK. Over residues 516–529 the composition is skewed to low complexity; the sequence is SKNLNPSNKSSVSK. Zn(2+) contacts are provided by histidine 550, histidine 575, and histidine 579.

It belongs to the colicin/pyosin nuclease family.

Functionally, this plasmid-coded bactericidal protein is an endonuclease active on both single- and double-stranded DNA but with undefined specificity. Its function is as follows. Colicins are polypeptide toxins produced by and active against E.coli and closely related bacteria. This chain is Colicin-E9 (col), found in Escherichia coli.